We begin with the raw amino-acid sequence, 256 residues long: Coiled-coil domain-containing protein 90B, mitochondrial (256 aa).

Residues 1–42 constitute a mitochondrion transit peptide; it reads MRSRWIWRFLRPDGGGIRWTSTPHGRLSPALRRGFLTTTTKS. Positions 129 to 167 form a coiled coil; that stretch reads LEKSEFANLRAENEKMKIELDQVKQQLTNETSRIRADNK. The chain crosses the membrane as a helical span at residues 231–253; it reads TIRYLAASVFTCLAIALGFYRFW.

It belongs to the CCDC90 family. As to quaternary structure, interacts with MCU.

Its subcellular location is the mitochondrion membrane. In Mus musculus (Mouse), this protein is Coiled-coil domain-containing protein 90B, mitochondrial (Ccdc90b).